The following is a 74-amino-acid chain: NADH dehydrogenase [ubiquinone] 1 alpha subcomplex assembly factor 8 (74 aa).

The CHCH domain maps to 22 to 69 (LAACGAEAAAYGRCVQASTAPGGRLSKDFCAREFEALRSCFAAAAKKT). 2 consecutive short sequence motifs (cx9C motif) follow at residues 25-35 (CGAEAAAYGRC) and 51-61 (CAREFEALRSC). Cystine bridges form between C25-C61 and C35-C51.

Interacts with NDUFAF5.

Its subcellular location is the mitochondrion. Functionally, involved in the assembly of mitochondrial NADH:ubiquinone oxidoreductase complex (complex I, MT-ND1). Required to stabilize NDUFAF5. The chain is NADH dehydrogenase [ubiquinone] 1 alpha subcomplex assembly factor 8 from Homo sapiens (Human).